The following is a 214-amino-acid chain: MALSEAAKQVQTALLERGLETPMVPCGLSSEARKEKIEHHMREILTLMSLDLRDDSLVETPKRIAKMYVDEIFSGLDYENFPKITVIENKMGFDEMVKVNDISLTSTCEHHLVTIDGVATVAYLPRKNIIGLSKINRIVRFFAQRPQVQERLTQQVLVALQTLLETKDVAVKMDAVHYCVKSRGVMDSTSTTTTTALGGIFKSNPATRAEFLSN.

Zn(2+) is bound by residues Cys-108, His-111, and Cys-179.

This sequence belongs to the GTP cyclohydrolase I family. Toroid-shaped homodecamer, composed of two pentamers of five dimers.

The catalysed reaction is GTP + H2O = 7,8-dihydroneopterin 3'-triphosphate + formate + H(+). Its pathway is cofactor biosynthesis; 7,8-dihydroneopterin triphosphate biosynthesis; 7,8-dihydroneopterin triphosphate from GTP: step 1/1. The protein is GTP cyclohydrolase 1 of Shewanella loihica (strain ATCC BAA-1088 / PV-4).